The following is a 358-amino-acid chain: Probable D-xylulose reductase A (358 aa).

3 residues coordinate Zn(2+): Cys-47, His-72, and Glu-73. 182–187 (GAGPVG) contacts NAD(+).

The protein belongs to the zinc-containing alcohol dehydrogenase family. The cofactor is Zn(2+).

The enzyme catalyses xylitol + NAD(+) = D-xylulose + NADH + H(+). The protein operates within carbohydrate degradation; L-arabinose degradation via L-arabinitol; D-xylulose 5-phosphate from L-arabinose (fungal route): step 4/5. Its function is as follows. Xylitol dehydrogenase which catalyzes the conversion of xylitol to D-xylulose. Xylose is a major component of hemicelluloses such as xylan. Most fungi utilize D-xylose via three enzymatic reactions, xylose reductase (XR), xylitol dehydrogenase (XDH), and xylulokinase, to form xylulose 5-phosphate, which enters pentose phosphate pathway. This Neosartorya fischeri (strain ATCC 1020 / DSM 3700 / CBS 544.65 / FGSC A1164 / JCM 1740 / NRRL 181 / WB 181) (Aspergillus fischerianus) protein is Probable D-xylulose reductase A (xdhA).